The following is a 65-amino-acid chain: uncharacterized protein (65 aa).

A DNA-binding region (ompR/PhoB-type) is located at residues 1-65 (MIALSVCWQI…ETGIGYRFML (65 aa)).

This is an uncharacterized protein from Escherichia coli (strain K12).